A 287-amino-acid polypeptide reads, in one-letter code: mRNA-capping enzyme regulatory subunit OPG124 (287 aa).

Belongs to the orthopoxvirus mRNA-capping enzyme regulatory subunit family. In terms of assembly, interacts with the catalytic subunit OPG113.

The protein resides in the virion. Functionally, regulatory subunit of the mRNA cap enzyme which stabilizes the catalytic subunit and enhances its methyltransferase activity through an allosteric mechanism. Heterodimeric mRNA capping enzyme catalyzes the linkage of a N7-methyl-guanosine moiety to the first transcribed nucleotide (cap 0 structure), whereas the methyltransferase OPG102 is responsible for a second methylation at the 2'-O position of the ribose (cap 1 structure). Also involved in early viral gene transcription termination and intermediate viral gene transcription initiation. Early gene transcription termination requires the termination factor VTF, the DNA-dependent ATPase NPH-I/OPG123 and the RAP94/OPG109 subunit of the viral RNA polymerase, as well as the presence of a specific termination motif. Binds, together with RAP94/OPG109, to the termination motif 5'-UUUUUNU-3' in the nascent early mRNA. The chain is mRNA-capping enzyme regulatory subunit OPG124 (OPG124) from Vaccinia virus (strain Copenhagen) (VACV).